The primary structure comprises 22 residues: Peptide PGLa-BM3 (22 aa).

Residue leucine 22 is modified to Leucine amide.

Expressed by the skin glands.

Its subcellular location is the secreted. Its function is as follows. Antimicrobial peptide. In Xenopus boumbaensis (Mawa clawed frog), this protein is Peptide PGLa-BM3.